A 114-amino-acid polypeptide reads, in one-letter code: Kita-kyushu lung cancer antigen 1 homolog (114 aa).

Residues 1 to 4 (MNVY) lie on the Cytoplasmic side of the membrane. A helical; Signal-anchor for type II membrane protein membrane pass occupies residues 5-22 (LLLASGILCALMTVFWKY). Topologically, residues 23–114 (RRFQRNTGEM…RSASAHRKST (92 aa)) are extracellular. A glycan (N-linked (GlcNAc...) asparagine) is linked at Asn84.

The protein localises to the cell membrane. This Macaca fascicularis (Crab-eating macaque) protein is Kita-kyushu lung cancer antigen 1 homolog (CT83).